Here is a 290-residue protein sequence, read N- to C-terminus: UPF0761 membrane protein ASA_4118 (290 aa).

6 consecutive transmembrane segments (helical) span residues 48–68 (LLSL…FPVF), 104–124 (NTTA…ISAI), 144–164 (FAMY…SIAI), 182–202 (IGYL…FLLV), 216–236 (AFIG…GFAI), and 250–270 (ALAT…VVLL).

This sequence belongs to the UPF0761 family.

The protein localises to the cell inner membrane. The sequence is that of UPF0761 membrane protein ASA_4118 from Aeromonas salmonicida (strain A449).